The primary structure comprises 1016 residues: Probable outer membrane protein PmpH (1016 aa).

An N-terminal signal peptide occupies residues 1-24; that stretch reads MPFSLRSTSFCFLACLCSYSYGFA. Residues 697 to 1016 enclose the Autotransporter domain; the sequence is GELVPNSLWV…FVSMGLNRIF (320 aa).

It belongs to the PMP outer membrane protein family.

The protein resides in the secreted. Its subcellular location is the cell wall. The protein localises to the cell outer membrane. In Chlamydia trachomatis serovar D (strain ATCC VR-885 / DSM 19411 / UW-3/Cx), this protein is Probable outer membrane protein PmpH (pmpH).